We begin with the raw amino-acid sequence, 273 residues long: Probable glycerophosphodiester phosphodiesterase GpdQ (273 aa).

Residues aspartate 8, histidine 10, aspartate 50, asparagine 80, histidine 154, histidine 194, and histidine 196 each contribute to the Fe cation site.

The protein belongs to the cyclic nucleotide phosphodiesterase class-III family. Fe(2+) serves as cofactor.

It catalyses the reaction a sn-glycero-3-phosphodiester + H2O = an alcohol + sn-glycerol 3-phosphate + H(+). The enzyme catalyses sn-glycero-3-phosphoethanolamine + H2O = ethanolamine + sn-glycerol 3-phosphate + H(+). In terms of biological role, catalyzes the hydrolysis of the 3'-5' phosphodiester bond of glycerophosphodiesters such as glycerophosphorylethanolamine (GPE), a typical phospholipid metabolite. This Arcobacter nitrofigilis (strain ATCC 33309 / DSM 7299 / CCUG 15893 / LMG 7604 / NCTC 12251 / CI) (Campylobacter nitrofigilis) protein is Probable glycerophosphodiester phosphodiesterase GpdQ.